Consider the following 173-residue polypeptide: Bifunctional protein PyrR (173 aa).

Positions 93 to 105 (VILVDDVLYTGRT) match the PRPP-binding motif.

It belongs to the purine/pyrimidine phosphoribosyltransferase family. PyrR subfamily. Homodimer and homohexamer; in equilibrium.

It carries out the reaction UMP + diphosphate = 5-phospho-alpha-D-ribose 1-diphosphate + uracil. In terms of biological role, regulates transcriptional attenuation of the pyrimidine nucleotide (pyr) operon by binding in a uridine-dependent manner to specific sites on pyr mRNA. This disrupts an antiterminator hairpin in the RNA and favors formation of a downstream transcription terminator, leading to a reduced expression of downstream genes. Functionally, also displays a weak uracil phosphoribosyltransferase activity which is not physiologically significant. In Streptococcus uberis (strain ATCC BAA-854 / 0140J), this protein is Bifunctional protein PyrR.